Here is a 427-residue protein sequence, read N- to C-terminus: Indole diterpene prenyltransferase idtF (427 aa).

Substrate is bound by residues arginine 97, lysine 195, arginine 264, lysine 266, tyrosine 268, and tyrosine 352.

This sequence belongs to the tryptophan dimethylallyltransferase family.

Its pathway is secondary metabolite biosynthesis. In terms of biological role, indole diterpene prenyltransferase; part of the gene cluster that mediates the biosynthesis of paspalitrems, indole-diterpene (IDT) mycotoxins that are potent tremorgens in mammals. The geranylgeranyl diphosphate (GGPP) synthase idtG is proposed to catalyze the first step in IDT biosynthesis via catalysis of a series of iterative condensations of isopentenyl diphosphate (IPP) with dimethylallyl diphosphate (DMAPP), geranyl diphosphate (GPP), and farnesyl diphosphate (FPP), to form GGPP. Condensation of indole-3-glycerol phosphate with GGPP by the prenyltransferase idtC then forms 3-geranylgeranylindole (3-GGI). Epoxidation of the two terminal alkenes of the geranylgeranyl moiety by the FAD-dependent monooxygenase idtM, and cyclization by the terpene cyclase idtB then leads to the production of paspaline. The cytochrome P450 monooxygenase idtP then catalyzes oxidative elimination of the pendant methyl group at C-12 of paspaline and generates the C-10 ketone to yield 13-desoxypaxilline. The cytochrome P450 monooxygenase idtQ may catalyze the C-13 oxidation of 13-desoxypaxilline to afford paxilline. Considering that both paspalicine and paxilline were detected in C.paspali, idtQ also catalyzes the formation of paspalinine from 13-desoxypaxilline via paspalicine as an intermediate. Finally, the alpha-prenyltransferase idtF prenylates paspalinine at the C-20 or the C-21 positions to yield paspalitrems A and C, respectively. The hydroxylation of paspalitrem A at C-32 by a still unknown oxidase affords paspalitrem B. The chain is Indole diterpene prenyltransferase idtF from Claviceps paspali (Rye ergot fungus).